Consider the following 434-residue polypeptide: Methylenetetrahydrofolate--tRNA-(uracil-5-)-methyltransferase TrmFO (434 aa).

Position 10-15 (10-15) interacts with FAD; that stretch reads GAGLAG.

Belongs to the MnmG family. TrmFO subfamily. FAD serves as cofactor.

The protein localises to the cytoplasm. It catalyses the reaction uridine(54) in tRNA + (6R)-5,10-methylene-5,6,7,8-tetrahydrofolate + NADH + H(+) = 5-methyluridine(54) in tRNA + (6S)-5,6,7,8-tetrahydrofolate + NAD(+). It carries out the reaction uridine(54) in tRNA + (6R)-5,10-methylene-5,6,7,8-tetrahydrofolate + NADPH + H(+) = 5-methyluridine(54) in tRNA + (6S)-5,6,7,8-tetrahydrofolate + NADP(+). Its function is as follows. Catalyzes the folate-dependent formation of 5-methyl-uridine at position 54 (M-5-U54) in all tRNAs. The protein is Methylenetetrahydrofolate--tRNA-(uracil-5-)-methyltransferase TrmFO of Bacillus cereus (strain Q1).